The chain runs to 967 residues: Probable disease resistance protein At1g61190 (967 aa).

The stretch at 20 to 68 forms a coiled coil; it reads RCLCGKGYIRNLEKNLRALQREMEDLRATQHEVQNKVAREESRHQQRLE. Residues 132 to 153 are disordered; that stretch reads GNFDEVSQPPPRSEVEERPTQP. Residues 138–441 form the NB-ARC domain; that stretch reads SQPPPRSEVE…CEGFIGEDQV (304 aa). 180–187 provides a ligand contact to ATP; that stretch reads GMGGVGKT. LRR repeat units lie at residues 516 to 537, 538 to 559, 562 to 585, 586 to 608, and 609 to 631; these read AVRR…SKCS, ELTT…FIRY, KLVV…SGLV, SLQY…KELK, and KLIF…SRLL.

This sequence belongs to the disease resistance NB-LRR family.

In terms of biological role, probable disease resistance protein. This Arabidopsis thaliana (Mouse-ear cress) protein is Probable disease resistance protein At1g61190.